Reading from the N-terminus, the 658-residue chain is DNA mismatch repair protein MutL (658 aa).

Basic and acidic residues predominate over residues 114 to 130; sequence RQEDSSHATQVKAEDGK. The disordered stretch occupies residues 114-137; the sequence is RQEDSSHATQVKAEDGKLSSPTAA.

The protein belongs to the DNA mismatch repair MutL/HexB family.

In terms of biological role, this protein is involved in the repair of mismatches in DNA. It is required for dam-dependent methyl-directed DNA mismatch repair. May act as a 'molecular matchmaker', a protein that promotes the formation of a stable complex between two or more DNA-binding proteins in an ATP-dependent manner without itself being part of a final effector complex. The chain is DNA mismatch repair protein MutL from Neisseria meningitidis serogroup C / serotype 2a (strain ATCC 700532 / DSM 15464 / FAM18).